Here is a 140-residue protein sequence, read N- to C-terminus: ATP synthase epsilon chain (140 aa).

Belongs to the ATPase epsilon chain family. F-type ATPases have 2 components, CF(1) - the catalytic core - and CF(0) - the membrane proton channel. CF(1) has five subunits: alpha(3), beta(3), gamma(1), delta(1), epsilon(1). CF(0) has three main subunits: a, b and c.

It is found in the cell membrane. In terms of biological role, produces ATP from ADP in the presence of a proton gradient across the membrane. In Baumannia cicadellinicola subsp. Homalodisca coagulata, this protein is ATP synthase epsilon chain.